Here is a 92-residue protein sequence, read N- to C-terminus: Small ribosomal subunit protein bS18 (92 aa).

This sequence belongs to the bacterial ribosomal protein bS18 family. Part of the 30S ribosomal subunit. Forms a tight heterodimer with protein bS6.

Binds as a heterodimer with protein bS6 to the central domain of the 16S rRNA, where it helps stabilize the platform of the 30S subunit. In Caulobacter sp. (strain K31), this protein is Small ribosomal subunit protein bS18.